Here is a 244-residue protein sequence, read N- to C-terminus: Probable phosphatase CA_C0509 (244 aa).

Residues H8, H10, H16, H41, E74, H102, H132, D193, and H195 each coordinate Zn(2+).

Belongs to the PHP family. The cofactor is Zn(2+).

This chain is Probable phosphatase CA_C0509, found in Clostridium acetobutylicum (strain ATCC 824 / DSM 792 / JCM 1419 / IAM 19013 / LMG 5710 / NBRC 13948 / NRRL B-527 / VKM B-1787 / 2291 / W).